Here is a 429-residue protein sequence, read N- to C-terminus: MTAPLKAIDGSADLPQLMNDLAKRARAAARVLALAPAEQKNRALEAMERRIRARADVIIAANAEDVAEAKAVGVTPSFVDRLTLTPARVAAMADGIAVVRGVADPVGVVTESWQRPNGMTIERVRVPLGVIGVIFESRPNVAADAGVLCLKSGNAVILRGGSDSFRSCRAIHECLVEGLREAGLPDTAITLVPTRDRAAVGLLLSGLNGGVDVIVPRGGKSLVARVEAEARVPVFAHLEGVNHVYVDGAADLDMAKSIVLNAKMRRTGVCGAAETLLIDRASQDKIKPLVDMLIGAGCEVRGDEAVRAADARVTPANNEDWDTEYLDAIIAAKVVDGVDGAIAHIHAHGSHHTDAIVTQDNKVADKFLNEVDSAIVLHNASTQFADGGEFGFGAEIGIATGKFHARGPVGVEQLTSFKYRIHGTGQTRP.

The protein belongs to the gamma-glutamyl phosphate reductase family.

It is found in the cytoplasm. The enzyme catalyses L-glutamate 5-semialdehyde + phosphate + NADP(+) = L-glutamyl 5-phosphate + NADPH + H(+). The protein operates within amino-acid biosynthesis; L-proline biosynthesis; L-glutamate 5-semialdehyde from L-glutamate: step 2/2. Catalyzes the NADPH-dependent reduction of L-glutamate 5-phosphate into L-glutamate 5-semialdehyde and phosphate. The product spontaneously undergoes cyclization to form 1-pyrroline-5-carboxylate. The sequence is that of Gamma-glutamyl phosphate reductase from Bradyrhizobium sp. (strain ORS 278).